Reading from the N-terminus, the 404-residue chain is Probable tRNA sulfurtransferase (404 aa).

The THUMP domain maps to 60–165 (TAVAESLKQV…EEAAYLSYET (106 aa)). Residues 183–184 (ML), 208–209 (HF), Arg-265, Gly-287, and Gln-296 each bind ATP.

This sequence belongs to the ThiI family.

It is found in the cytoplasm. It catalyses the reaction [ThiI sulfur-carrier protein]-S-sulfanyl-L-cysteine + a uridine in tRNA + 2 reduced [2Fe-2S]-[ferredoxin] + ATP + H(+) = [ThiI sulfur-carrier protein]-L-cysteine + a 4-thiouridine in tRNA + 2 oxidized [2Fe-2S]-[ferredoxin] + AMP + diphosphate. It carries out the reaction [ThiS sulfur-carrier protein]-C-terminal Gly-Gly-AMP + S-sulfanyl-L-cysteinyl-[cysteine desulfurase] + AH2 = [ThiS sulfur-carrier protein]-C-terminal-Gly-aminoethanethioate + L-cysteinyl-[cysteine desulfurase] + A + AMP + 2 H(+). The protein operates within cofactor biosynthesis; thiamine diphosphate biosynthesis. In terms of biological role, catalyzes the ATP-dependent transfer of a sulfur to tRNA to produce 4-thiouridine in position 8 of tRNAs, which functions as a near-UV photosensor. Also catalyzes the transfer of sulfur to the sulfur carrier protein ThiS, forming ThiS-thiocarboxylate. This is a step in the synthesis of thiazole, in the thiamine biosynthesis pathway. The sulfur is donated as persulfide by IscS. This is Probable tRNA sulfurtransferase from Streptococcus pneumoniae serotype 19F (strain G54).